The sequence spans 126 residues: Large ribosomal subunit protein bL17 (126 aa).

Belongs to the bacterial ribosomal protein bL17 family. In terms of assembly, part of the 50S ribosomal subunit. Contacts protein L32.

The sequence is that of Large ribosomal subunit protein bL17 from Vibrio atlanticus (strain LGP32) (Vibrio splendidus (strain Mel32)).